Reading from the N-terminus, the 432-residue chain is Adenylosuccinate synthetase (432 aa).

GTP-binding positions include 13–19 (GDEGKGK) and 41–43 (GHT). The active-site Proton acceptor is the D14. Mg(2+) contacts are provided by D14 and G41. Residues 14–17 (DEGK), 39–42 (NAGH), T130, R144, Q225, T240, and R304 contribute to the IMP site. H42 functions as the Proton donor in the catalytic mechanism. Residue 300 to 306 (ATTGRRR) coordinates substrate. GTP contacts are provided by residues R306, 332 to 334 (KLD), and 415 to 417 (STG).

Belongs to the adenylosuccinate synthetase family. In terms of assembly, homodimer. Mg(2+) is required as a cofactor.

Its subcellular location is the cytoplasm. The enzyme catalyses IMP + L-aspartate + GTP = N(6)-(1,2-dicarboxyethyl)-AMP + GDP + phosphate + 2 H(+). It functions in the pathway purine metabolism; AMP biosynthesis via de novo pathway; AMP from IMP: step 1/2. In terms of biological role, plays an important role in the de novo pathway of purine nucleotide biosynthesis. Catalyzes the first committed step in the biosynthesis of AMP from IMP. The polypeptide is Adenylosuccinate synthetase (Salmonella heidelberg (strain SL476)).